Here is a 57-residue protein sequence, read N- to C-terminus: uncharacterized protein (57 aa).

Positions 1-57 are disordered; that stretch reads MITPIGKNSNSNSNSNSNSNSNSNSNSNSNSNSNSNSNSNSNSNSNSNSNSNSNSNN. The span at 8–57 shows a compositional bias: low complexity; that stretch reads NSNSNSNSNSNSNSNSNSNSNSNSNSNSNSNSNSNSNSNSNSNSNSNSNN.

This is an uncharacterized protein from Dictyostelium discoideum (Social amoeba).